Reading from the N-terminus, the 181-residue chain is Large ribosomal subunit protein uL5c (181 aa).

It belongs to the universal ribosomal protein uL5 family. Part of the 50S ribosomal subunit; contacts the 5S rRNA.

The protein resides in the plastid. The protein localises to the chloroplast. Its function is as follows. Binds 5S rRNA, forms part of the central protuberance of the 50S subunit. This is Large ribosomal subunit protein uL5c (rpl5) from Rhodomonas salina (Cryptomonas salina).